Reading from the N-terminus, the 283-residue chain is Nucleotide-binding protein THEYE_A0235 (283 aa).

Residue 12-19 (GLSGGGKT) coordinates ATP. GTP is bound at residue 62 to 65 (DIRV).

It belongs to the RapZ-like family.

In terms of biological role, displays ATPase and GTPase activities. The sequence is that of Nucleotide-binding protein THEYE_A0235 from Thermodesulfovibrio yellowstonii (strain ATCC 51303 / DSM 11347 / YP87).